The chain runs to 180 residues: Ribulose bisphosphate carboxylase small subunit, chloroplastic 5 (180 aa).

A chloroplast-targeting transit peptide spans methionine 1–arginine 56.

It belongs to the RuBisCO small chain family. In terms of assembly, heterohexadecamer of 8 large and 8 small subunits.

It localises to the plastid. The protein resides in the chloroplast. Functionally, ruBisCO catalyzes two reactions: the carboxylation of D-ribulose 1,5-bisphosphate, the primary event in carbon dioxide fixation, as well as the oxidative fragmentation of the pentose substrate. Both reactions occur simultaneously and in competition at the same active site. Although the small subunit is not catalytic it is essential for maximal activity. This Solanum tuberosum (Potato) protein is Ribulose bisphosphate carboxylase small subunit, chloroplastic 5.